The following is a 319-amino-acid chain: Acetyl-coenzyme A carboxylase carboxyl transferase subunit alpha (319 aa).

Positions 32–293 (NVETEVRALR…KAVLLNELDA (262 aa)) constitute a CoA carboxyltransferase C-terminal domain.

This sequence belongs to the AccA family. Acetyl-CoA carboxylase is a heterohexamer composed of biotin carboxyl carrier protein (AccB), biotin carboxylase (AccC) and two subunits each of ACCase subunit alpha (AccA) and ACCase subunit beta (AccD).

It is found in the cytoplasm. The enzyme catalyses N(6)-carboxybiotinyl-L-lysyl-[protein] + acetyl-CoA = N(6)-biotinyl-L-lysyl-[protein] + malonyl-CoA. It participates in lipid metabolism; malonyl-CoA biosynthesis; malonyl-CoA from acetyl-CoA: step 1/1. Component of the acetyl coenzyme A carboxylase (ACC) complex. First, biotin carboxylase catalyzes the carboxylation of biotin on its carrier protein (BCCP) and then the CO(2) group is transferred by the carboxyltransferase to acetyl-CoA to form malonyl-CoA. This chain is Acetyl-coenzyme A carboxylase carboxyl transferase subunit alpha, found in Xanthomonas oryzae pv. oryzae (strain MAFF 311018).